An 864-amino-acid polypeptide reads, in one-letter code: Alanine--tRNA ligase (864 aa).

Residues H553, H557, C655, and H659 each contribute to the Zn(2+) site. Residues V828–S847 form a disordered region.

The protein belongs to the class-II aminoacyl-tRNA synthetase family. It depends on Zn(2+) as a cofactor.

It localises to the cytoplasm. The catalysed reaction is tRNA(Ala) + L-alanine + ATP = L-alanyl-tRNA(Ala) + AMP + diphosphate. Catalyzes the attachment of alanine to tRNA(Ala) in a two-step reaction: alanine is first activated by ATP to form Ala-AMP and then transferred to the acceptor end of tRNA(Ala). Also edits incorrectly charged Ser-tRNA(Ala) and Gly-tRNA(Ala) via its editing domain. The sequence is that of Alanine--tRNA ligase from Hydrogenovibrio crunogenus (strain DSM 25203 / XCL-2) (Thiomicrospira crunogena).